The sequence spans 1032 residues: UPF0182 protein sll1060 (1032 aa).

A run of 9 helical transmembrane segments spans residues 27–49 (WVKG…RIYV), 69–87 (WQGS…FIVF), 144–166 (VLLP…YVFI), 197–219 (FSGM…IGVL), 226–248 (PGLV…FRLL), 283–300 (WWRG…LIIL), 321–339 (HISA…EHWL), 364–386 (LPVE…WLSV), and 406–428 (IIGL…LGGW).

It belongs to the UPF0182 family.

It localises to the cell membrane. This is UPF0182 protein sll1060 from Synechocystis sp. (strain ATCC 27184 / PCC 6803 / Kazusa).